The primary structure comprises 276 residues: Stathmin domain-containing protein 1 (276 aa).

Disordered stretches follow at residues 1 to 40 (MGCG…ENCS), 61 to 106 (VQMG…RERQ), and 226 to 250 (GFEP…ATLI). Gly2 carries the N-myristoyl glycine lipid modification. Polar residues-rich tracts occupy residues 68–78 (GTISENSPSPS) and 87–100 (DLVT…PQSL). In terms of domain architecture, SLD spans 118–244 (QGIIQSHSKV…GKPLKRKKSK (127 aa)).

The polypeptide is Stathmin domain-containing protein 1 (STMND1) (Homo sapiens (Human)).